Here is a 1096-residue protein sequence, read N- to C-terminus: Serine/threonine-protein kinase mig-15 (1096 aa).

The 268-residue stretch at 21–288 (FELIEVVGNG…TGALLRHPFI (268 aa)) folds into the Protein kinase domain. ATP contacts are provided by residues 27–35 (VGNGTYGQV) and lysine 50. The active-site Proton acceptor is the aspartate 151. Residues 293-315 (HEQTIRHSIKEHIDRNRRVKKDD) are compositionally biased toward basic and acidic residues. 4 disordered regions span residues 293–351 (HEQT…MIPM), 380–492 (LPQQ…QQSR), 517–545 (KMGG…EASI), and 574–664 (NGEG…DLLP). Over residues 316 to 328 (ADYEYSGSEDDEP) the composition is skewed to acidic residues. Residues 380 to 393 (LPQQPAPAPFQYQQ) are compositionally biased toward low complexity. 2 stretches are compositionally biased toward basic and acidic residues: residues 397–408 (VEPRRESSEVKL) and 453–472 (NYEK…ERQA). A compositionally biased stretch (pro residues) spans 532–541 (SPPPPAPPPR). Residues 629 to 642 (LDDDDSDSDNEEGN) are compositionally biased toward acidic residues. Residues 778-1070 (SGEILCAALW…KFLCERNDKV (293 aa)) form the CNH domain.

Belongs to the protein kinase superfamily. STE Ser/Thr protein kinase family. STE20 subfamily.

The enzyme catalyses L-seryl-[protein] + ATP = O-phospho-L-seryl-[protein] + ADP + H(+). It carries out the reaction L-threonyl-[protein] + ATP = O-phospho-L-threonyl-[protein] + ADP + H(+). Its function is as follows. Involved in cell migration and signal transduction. Important in several developmental processes including epidermal development, Q neuroblast migrations and muscle arm targeting. Required with ina-1/pat-3 to stabilize the commissural axons growth cone along a precise direction and are required for the cell to respond appropriately when signaling in the growth cone must change. During gonad morphogenesis, involved in distal tip cell (DTC) migration from the dorsal side of the hermaphrodite body to the midbody to allow for formation of gonad arms. This is Serine/threonine-protein kinase mig-15 (mig-15) from Caenorhabditis elegans.